A 196-amino-acid polypeptide reads, in one-letter code: uncharacterized protein (196 aa).

Residues R44–A80 form a disordered region.

This is an uncharacterized protein from Treponema pallidum (strain Nichols).